A 130-amino-acid polypeptide reads, in one-letter code: Large ribosomal subunit protein bL12 (130 aa).

This sequence belongs to the bacterial ribosomal protein bL12 family. In terms of assembly, homodimer. Part of the ribosomal stalk of the 50S ribosomal subunit. Forms a multimeric L10(L12)X complex, where L10 forms an elongated spine to which 2 to 4 L12 dimers bind in a sequential fashion. Binds GTP-bound translation factors.

Forms part of the ribosomal stalk which helps the ribosome interact with GTP-bound translation factors. Is thus essential for accurate translation. The polypeptide is Large ribosomal subunit protein bL12 (Cutibacterium acnes (strain DSM 16379 / KPA171202) (Propionibacterium acnes)).